Consider the following 365-residue polypeptide: Zinc finger protein lsy-2 (365 aa).

Residues 1–36 are disordered; it reads MLTRRNAKQSQRNSADQSLSEFNSSSMTHGSNQSVY. Residues 8–36 are compositionally biased toward polar residues; sequence KQSQRNSADQSLSEFNSSSMTHGSNQSVY. 5 C2H2-type zinc fingers span residues 78-100, 106-128, 134-156, 264-287, and 296-318; these read HQCN…AVIH, FRCD…RSVH, HACP…LRTH, HDCP…TLEH, and FFCE…MSYH.

It localises to the nucleus speckle. Functionally, involved in transcriptional regulation. Required to specify left-right asymmetry of the ASE gustatory neurons, probably acting upstream of microRNA lsy-6. Involved in maintaining the distinction between somatic and germ cells, perhaps acting by repressing germ cell-specific genes in somatic cells. This is Zinc finger protein lsy-2 from Caenorhabditis elegans.